The primary structure comprises 487 residues: N-succinylglutamate 5-semialdehyde dehydrogenase (487 aa).

221–226 (GSSRTG) serves as a coordination point for NAD(+). Catalysis depends on residues E244 and C278.

Belongs to the aldehyde dehydrogenase family. AstD subfamily.

It catalyses the reaction N-succinyl-L-glutamate 5-semialdehyde + NAD(+) + H2O = N-succinyl-L-glutamate + NADH + 2 H(+). The protein operates within amino-acid degradation; L-arginine degradation via AST pathway; L-glutamate and succinate from L-arginine: step 4/5. Its function is as follows. Catalyzes the NAD-dependent reduction of succinylglutamate semialdehyde into succinylglutamate. The protein is N-succinylglutamate 5-semialdehyde dehydrogenase of Pseudomonas putida (strain W619).